The sequence spans 339 residues: Dihydroorotase (339 aa).

His12 and His14 together coordinate Zn(2+). Residues 14 to 16 and Asn40 contribute to the substrate site; that span reads HVR. The Zn(2+) site is built by Lys94, His133, His167, and Asp239. At Lys94 the chain carries N6-carboxylysine. Residue His133 coordinates substrate. The active site involves Asp239. Substrate contacts are provided by His243 and Ala255.

This sequence belongs to the metallo-dependent hydrolases superfamily. DHOase family. Class II DHOase subfamily. Homodimer. The cofactor is Zn(2+).

The enzyme catalyses (S)-dihydroorotate + H2O = N-carbamoyl-L-aspartate + H(+). It participates in pyrimidine metabolism; UMP biosynthesis via de novo pathway; (S)-dihydroorotate from bicarbonate: step 3/3. Its function is as follows. Catalyzes the reversible cyclization of carbamoyl aspartate to dihydroorotate. This Helicobacter pylori (strain G27) protein is Dihydroorotase.